The following is a 638-amino-acid chain: Probable glycerol-3-phosphate dehydrogenase, mitochondrial (638 aa).

100–128 (DLIVIGGGATGTGVALDAQSRGMKVALFE) is an FAD binding site.

Belongs to the FAD-dependent glycerol-3-phosphate dehydrogenase family. The cofactor is FAD.

Its subcellular location is the mitochondrion. It carries out the reaction a quinone + sn-glycerol 3-phosphate = dihydroxyacetone phosphate + a quinol. It functions in the pathway polyol metabolism; glycerol degradation via glycerol kinase pathway; glycerone phosphate from sn-glycerol 3-phosphate (anaerobic route): step 1/1. The protein is Probable glycerol-3-phosphate dehydrogenase, mitochondrial of Dictyostelium discoideum (Social amoeba).